The chain runs to 555 residues: Acetyl-coenzyme A thioesterase (555 aa).

Residues Ala-5–Gly-117 enclose the HotDog ACOT-type 1 domain. Position 33 is an N6-succinyllysine (Lys-33). CoA contacts are provided by residues Thr-53–Ser-55, Ser-82–Ser-84, and Arg-144. 2 positions are modified to N6-succinyllysine: Lys-159 and Lys-228. The region spanning Arg-179–Lys-294 is the HotDog ACOT-type 2 domain. Lys-234–Arg-236 is a CoA binding site. One can recognise an START domain in the interval Cys-340–Asp-549.

In terms of assembly, homodimer or homotetramer.

It localises to the cytoplasm. The protein resides in the cytosol. The enzyme catalyses acetyl-CoA + H2O = acetate + CoA + H(+). It catalyses the reaction butanoyl-CoA + H2O = butanoate + CoA + H(+). The catalysed reaction is hexanoyl-CoA + H2O = hexanoate + CoA + H(+). Its pathway is lipid metabolism; fatty acid metabolism. Inhibited by ADP. Active in the presence of ATP. Cold labile, it dissociates into inactive monomers at low temperature. In terms of biological role, catalyzes the hydrolysis of acyl-CoAs into free fatty acids and coenzyme A (CoASH), regulating their respective intracellular levels. Preferentially hydrolyzes acetyl-CoA. The polypeptide is Acetyl-coenzyme A thioesterase (ACOT12) (Homo sapiens (Human)).